A 645-amino-acid chain; its full sequence is Protein LHY (645 aa).

Ser6 bears the Phosphoserine mark. The 55-residue stretch at 19–73 (TITKQRERWTEDEHERFLEALRLYGRAWQRIEEHIGTKTAVQIRSHAQKFFTKLE) folds into the HTH myb-type domain. A DNA-binding region (H-T-H motif) is located at residues 46 to 69 (WQRIEEHIGTKTAVQIRSHAQKFF). 4 disordered regions span residues 89-127 (IEIP…AKLV), 149-212 (EKTS…GTTV), 410-437 (QNLA…ADSK), and 458-500 (AQKK…TDEN). Positions 110-120 (NNGTSSSQVSS) are enriched in polar residues. Over residues 149–158 (EKTSTGKENQ) the composition is skewed to basic and acidic residues. The segment covering 159-169 (DENCSGVSTVN) has biased composition (polar residues). The segment covering 197-207 (VPKKNKDKDGN) has biased composition (basic and acidic residues). Positions 468-478 (SCGSNTPSGSD) are enriched in polar residues. The segment covering 483 to 498 (ALDKMEKDKEDVKETD) has biased composition (basic and acidic residues).

As to quaternary structure, homodimer or heterodimer with CCA1. Interacts with CCA1 (via internal domain); independently of photoperiod. Functions probably as part of a large complex. Interacts with CKB1 and CKB3. Interacts with LNK1 and LNK2. In terms of processing, phosphorylated by CK2. Expressed in leaves, roots, stems, flowers and siliques.

Its subcellular location is the nucleus. Functionally, transcription factor involved in the circadian clock. Binds to the promoter region of APRR1/TOC1 and TCP21/CHE to repress their transcription. Represses both CCA1 and itself. May recognize the promoter of JMJ14 to regulates its expression during the night in a circadian manner. The sequence is that of Protein LHY from Arabidopsis thaliana (Mouse-ear cress).